We begin with the raw amino-acid sequence, 159 residues long: Outer envelope pore protein 16-3, chloroplastic/mitochondrial (159 aa).

M1 is modified (N-acetylmethionine). Positions M1–H65 are contains beta strands. 3 helical membrane-spanning segments follow: residues I24 to W40, M62 to V79, and F92 to Y109.

The protein belongs to the Tim17/Tim22/Tim23 family. Plastid outer envelope porin OEP16 (TC 1.B.30) subfamily. As to quaternary structure, homodimer and oligomers in membrane. Part of both the NADH-ubiquinone oxidoreductase complex I and of the TIM17:23 complex. Interacts with TIM23-2.

The protein resides in the plastid. The protein localises to the chloroplast outer membrane. It localises to the mitochondrion outer membrane. Its subcellular location is the mitochondrion inner membrane. In terms of biological role, voltage-dependent high-conductance channel with a slight cation-selectivity; selective for amino acids but excludes triosephosphates or uncharged sugars. Non-essential amino acid-selective channel protein and translocation pore for NADPH:protochlorophyllide oxidoreductase A (PORA) and possibly PORB. The polypeptide is Outer envelope pore protein 16-3, chloroplastic/mitochondrial (OEP163) (Arabidopsis thaliana (Mouse-ear cress)).